Consider the following 124-residue polypeptide: Glutaredoxin-2 (124 aa).

Residues C13 and C16 are joined by a disulfide bond.

Belongs to the glutaredoxin family. As to quaternary structure, homodimer.

The protein resides in the host cytoplasm. Its function is as follows. Glutaredoxin necessary for virion morphogenesis and virus replication. Functions as a thiol-disulfide transfer protein between membrane-associated OPG128 and substrates OPG095 or OPG053. The complete pathway for formation of disulfide bonds in intracellular virion membrane proteins sequentially involves oxidation of OPG072, OPG128 and OPG088. Exhibit thioltransferase and dehydroascorbate reductase activities in vitro. This chain is Glutaredoxin-2 (OPG088), found in Oryctolagus cuniculus (Rabbit).